A 173-amino-acid chain; its full sequence is Ribosome maturation factor RimM (173 aa).

In terms of domain architecture, PRC barrel spans 98–170 (VGDMTWDSFI…SLTVSLPEGL (73 aa)).

This sequence belongs to the RimM family. In terms of assembly, binds ribosomal protein uS19.

The protein resides in the cytoplasm. Functionally, an accessory protein needed during the final step in the assembly of 30S ribosomal subunit, possibly for assembly of the head region. Essential for efficient processing of 16S rRNA. May be needed both before and after RbfA during the maturation of 16S rRNA. It has affinity for free ribosomal 30S subunits but not for 70S ribosomes. The sequence is that of Ribosome maturation factor RimM from Parabacteroides distasonis (strain ATCC 8503 / DSM 20701 / CIP 104284 / JCM 5825 / NCTC 11152).